Reading from the N-terminus, the 111-residue chain is Small ribosomal subunit protein bS16 (111 aa).

The segment at 92–111 (EKGVKESNEIVEPEGEEVKE) is disordered. Residues 100–111 (EIVEPEGEEVKE) are compositionally biased toward acidic residues.

Belongs to the bacterial ribosomal protein bS16 family.

This is Small ribosomal subunit protein bS16 from Petrotoga mobilis (strain DSM 10674 / SJ95).